The following is a 293-amino-acid chain: Energy-coupling factor transporter ATP-binding protein EcfA2 (293 aa).

The region spanning 3 to 246 (ITFQKVEHRY…ADELEKIGVD (244 aa)) is the ABC transporter domain. 40-47 (GHTGSGKS) provides a ligand contact to ATP.

Belongs to the ABC transporter superfamily. Energy-coupling factor EcfA family. As to quaternary structure, forms a stable energy-coupling factor (ECF) transporter complex composed of 2 membrane-embedded substrate-binding proteins (S component), 2 ATP-binding proteins (A component) and 2 transmembrane proteins (T component).

The protein resides in the cell membrane. In terms of biological role, ATP-binding (A) component of a common energy-coupling factor (ECF) ABC-transporter complex. Unlike classic ABC transporters this ECF transporter provides the energy necessary to transport a number of different substrates. The sequence is that of Energy-coupling factor transporter ATP-binding protein EcfA2 from Bacillus cereus (strain ATCC 14579 / DSM 31 / CCUG 7414 / JCM 2152 / NBRC 15305 / NCIMB 9373 / NCTC 2599 / NRRL B-3711).